Reading from the N-terminus, the 441-residue chain is Peroxisome proliferator-activated receptor delta (441 aa).

The disordered stretch occupies residues 1 to 58 (MEQPPGEAAEVREEEEKKEVAEAEGAPELNGGPERSLPSSSYTDLSRSSSPPSLLDQL). The span at 9–21 (AEVREEEEKKEVA) shows a compositional bias: basic and acidic residues. Residues 36-55 (SLPSSSYTDLSRSSSPPSLL) show a composition bias toward low complexity. Positions 70-145 (LNMECRVCGD…LGMSHNAIRF (76 aa)) form a DNA-binding region, nuclear receptor. NR C4-type zinc fingers lie at residues 74–94 (CRVC…CEGC) and 111–133 (CERI…FQKC). The region spanning 211-439 (FVIHDIETLW…HPLLQEIYKD (229 aa)) is the NR LBD domain.

It belongs to the nuclear hormone receptor family. NR1 subfamily. Heterodimer with the retinoid X receptor. Interacts (via domain NR LBD) with CRY1 and CRY2 in a ligand-dependent manner. 'Lys-48'-linked polyubiquitinated; leading to proteasomal degradation. Deubiquitinated and stabilized by OTUD3.

The protein resides in the nucleus. In terms of biological role, ligand-activated transcription factor key mediator of energy metabolism in adipose tissues. Receptor that binds peroxisome proliferators such as hypolipidemic drugs and fatty acids. Has a preference for poly-unsaturated fatty acids, such as gamma-linoleic acid and eicosapentanoic acid. Once activated by a ligand, the receptor binds to promoter elements of target genes. Regulates the peroxisomal beta-oxidation pathway of fatty acids. Functions as a transcription activator for the acyl-CoA oxidase gene. Decreases expression of NPC1L1 once activated by a ligand. The polypeptide is Peroxisome proliferator-activated receptor delta (PPARD) (Canis lupus familiaris (Dog)).